The chain runs to 421 residues: Putative zinc finger protein R05D3.3 (421 aa).

C2H2-type zinc fingers lie at residues 207 to 228 (VLCV…IEAH) and 234 to 257 (YKCS…RTQH). The disordered stretch occupies residues 400–421 (GSSITDSNEPGPSEIKKELAEV).

It is found in the nucleus. In Caenorhabditis elegans, this protein is Putative zinc finger protein R05D3.3.